A 308-amino-acid chain; its full sequence is Ribosomal RNA small subunit methyltransferase A (308 aa).

S-adenosyl-L-methionine-binding residues include Asn35, Val37, Gly62, Glu83, Asp113, and Asn136.

Belongs to the class I-like SAM-binding methyltransferase superfamily. rRNA adenine N(6)-methyltransferase family. RsmA subfamily.

The protein localises to the cytoplasm. The enzyme catalyses adenosine(1518)/adenosine(1519) in 16S rRNA + 4 S-adenosyl-L-methionine = N(6)-dimethyladenosine(1518)/N(6)-dimethyladenosine(1519) in 16S rRNA + 4 S-adenosyl-L-homocysteine + 4 H(+). In terms of biological role, specifically dimethylates two adjacent adenosines (A1518 and A1519) in the loop of a conserved hairpin near the 3'-end of 16S rRNA in the 30S particle. May play a critical role in biogenesis of 30S subunits. This chain is Ribosomal RNA small subunit methyltransferase A, found in Bifidobacterium longum (strain NCC 2705).